The sequence spans 73 residues: Mitofissin (73 aa).

It belongs to the ?ATG44? family. Homooligomer. Found as homooctamer in solution, but binds to membranes either as a monomer, dimer, or tetramer, not as an octamer.

It is found in the mitochondrion intermembrane space. The protein resides in the vacuole. Its function is as follows. Mitochondrial fission factor that acts directly on lipid membranes to drive mitochondrial fission required for mitophagy. Directly binds to lipid membranes and brings about lipid membrane fragility to facilitate membrane fission and engulfment of mitochondria by the phagophore. This Saccharomyces cerevisiae (strain ATCC 204508 / S288c) (Baker's yeast) protein is Mitofissin.